A 484-amino-acid polypeptide reads, in one-letter code: Acetyl-coenzyme A carboxylase carboxyl transferase subunit beta, chloroplastic (484 aa).

The 262-residue stretch at 223–484 folds into the CoA carboxyltransferase N-terminal domain; sequence LWIQCDNCYG…LHAFFPLNKN (262 aa). The Zn(2+) site is built by C227, C230, C243, and C246. A C4-type zinc finger spans residues 227 to 246; that stretch reads CDNCYGLMYKKVKMNVCEQC.

Belongs to the AccD/PCCB family. In terms of assembly, acetyl-CoA carboxylase is a heterohexamer composed of biotin carboxyl carrier protein, biotin carboxylase and 2 subunits each of ACCase subunit alpha and ACCase plastid-coded subunit beta (accD). Requires Zn(2+) as cofactor.

Its subcellular location is the plastid. The protein localises to the chloroplast stroma. The catalysed reaction is N(6)-carboxybiotinyl-L-lysyl-[protein] + acetyl-CoA = N(6)-biotinyl-L-lysyl-[protein] + malonyl-CoA. It participates in lipid metabolism; malonyl-CoA biosynthesis; malonyl-CoA from acetyl-CoA: step 1/1. Component of the acetyl coenzyme A carboxylase (ACC) complex. Biotin carboxylase (BC) catalyzes the carboxylation of biotin on its carrier protein (BCCP) and then the CO(2) group is transferred by the transcarboxylase to acetyl-CoA to form malonyl-CoA. The chain is Acetyl-coenzyme A carboxylase carboxyl transferase subunit beta, chloroplastic from Crucihimalaya wallichii (Rock-cress).